Reading from the N-terminus, the 496-residue chain is MHAKSLTELRAALDAKECSAVELAQHYLKRIDAARDLNAFVHVDAELTLAQAKAADAALAKGEAGPLAGLPIAHKDVFVTRGWRSTAGSKMLANYASPFDATVVARLSAAGMVTLGKTNMDEFAMGSSNENSAFGPVKNPWDTNAVPGGSSGGSSAAVAARLAPAATGTDTGGSIRQPASFAGVTGIKPTYGRVSRYGMIAFASSLDQGGPMARSAADCALLLNAMAGFDERDSTSLERADEDYTRHLGKTWAAGGDAGKPLAGLRIGLPAEYFGAGLADDVRAAIDAALKTYETLGATLVPVSLPKTELSIPVYYVIAPAEASSNLSRFDGVRYGHRAAEYRDLLDMYKKSRAEGFGPEVKRRILVGTYVLSHGYYDAYYLQAQKIRRIIAQDFQEAFKSCDVIMGPASPTVAWDIGAKGDDPVQMYLADIYTLSVSLAGLPGMSVPCGFGAGANAKRPVGLQIIGNYFDEARMLQVADAFQRATDWHVQEPAGV.

Active-site charge relay system residues include K75 and S150. S174 serves as the catalytic Acyl-ester intermediate.

It belongs to the amidase family. GatA subfamily. As to quaternary structure, heterotrimer of A, B and C subunits.

The enzyme catalyses L-glutamyl-tRNA(Gln) + L-glutamine + ATP + H2O = L-glutaminyl-tRNA(Gln) + L-glutamate + ADP + phosphate + H(+). Its function is as follows. Allows the formation of correctly charged Gln-tRNA(Gln) through the transamidation of misacylated Glu-tRNA(Gln) in organisms which lack glutaminyl-tRNA synthetase. The reaction takes place in the presence of glutamine and ATP through an activated gamma-phospho-Glu-tRNA(Gln). The chain is Glutamyl-tRNA(Gln) amidotransferase subunit A from Burkholderia thailandensis (strain ATCC 700388 / DSM 13276 / CCUG 48851 / CIP 106301 / E264).